The sequence spans 737 residues: Catalase-peroxidase (737 aa).

The signal sequence occupies residues 1 to 23; that stretch reads MLKKILPVLITLAIVHNTPTAWA. A cross-link (tryptophyl-tyrosyl-methioninium (Trp-Tyr) (with M-249)) is located at residues 102–223; it reads WHGAGTYRIY…LAATQMGLIY (122 aa). H103 serves as the catalytic Proton acceptor. Residues 223 to 249 constitute a cross-link (tryptophyl-tyrosyl-methioninium (Tyr-Met) (with W-102)); the sequence is YVNPEGPNGKPDPVAAAKDIREAFARM. H264 contributes to the heme b binding site.

The protein belongs to the peroxidase family. Peroxidase/catalase subfamily. Homodimer or homotetramer. The cofactor is heme b. Post-translationally, formation of the three residue Trp-Tyr-Met cross-link is important for the catalase, but not the peroxidase activity of the enzyme.

The enzyme catalyses H2O2 + AH2 = A + 2 H2O. The catalysed reaction is 2 H2O2 = O2 + 2 H2O. In terms of biological role, bifunctional enzyme with both catalase and broad-spectrum peroxidase activity. This chain is Catalase-peroxidase, found in Yersinia pseudotuberculosis serotype I (strain IP32953).